A 131-amino-acid chain; its full sequence is MLSAARLIAPAARSAIFSNAAVVRPLAAVSTQTQLVPAAPAQLSAVRSFQTTSVTKDIDSAAKFIGAGAATVGVAGSGAGIGTVFGSLIIGYARNPSLKQQLFSYAILGFALSEAMGLFCLMMAFLLLFAF.

A mitochondrion-targeting transit peptide spans 1 to 56 (MLSAARLIAPAARSAIFSNAAVVRPLAAVSTQTQLVPAAPAQLSAVRSFQTTSVTK). A helical transmembrane segment spans residues 72-92 (VGVAGSGAGIGTVFGSLIIGY). Lys99 carries the N6,N6,N6-trimethyllysine modification. Residues 107–127 (ILGFALSEAMGLFCLMMAFLL) form a helical membrane-spanning segment.

This sequence belongs to the ATPase C chain family. F-type ATPases have 2 components, CF(1) - the catalytic core - and CF(0) - the membrane proton channel. CF(1) has five subunits: alpha(3), beta(3), gamma(1), delta(1), epsilon(1). CF(0) has three main subunits: a, b and c. Trimethylated by ATPSCKMT at Lys-99. Methylation may be required for proper incorporation of the C subunit into the ATP synthase complex and mitochondrial respiration.

The protein localises to the mitochondrion membrane. In terms of biological role, mitochondrial membrane ATP synthase (F(1)F(0) ATP synthase or Complex V) produces ATP from ADP in the presence of a proton gradient across the membrane which is generated by electron transport complexes of the respiratory chain. F-type ATPases consist of two structural domains, F(1) - containing the extramembraneous catalytic core and F(0) - containing the membrane proton channel, linked together by a central stalk and a peripheral stalk. During catalysis, ATP synthesis in the catalytic domain of F(1) is coupled via a rotary mechanism of the central stalk subunits to proton translocation. Part of the complex F(0) domain. A homomeric c-ring of probably 10 subunits is part of the complex rotary element. The polypeptide is ATP synthase lipid-binding protein, mitochondrial (Manduca sexta (Tobacco hawkmoth)).